Reading from the N-terminus, the 360-residue chain is MNSIIVNKLIALQERFNVLEKLLSKPNAIDDKKHFCTLAKEHARLSEIVVCFERWLDIKQEIINTKKLLEDVDMHDIAQDELKTFYLNRNNIEKNLKILLLPTDSNDKLGCFIELRAGTGGKEAAIFTGELFRMYVRYSEVRRWKMEIINATYGECGGYKEIIAKIPYRGAYSLLKFESGGHRVQRIPHTESQGRIHTSTCTIAVIPEIPDIELPSIDPHDLRIDTFRSSGAGGQHVNTTDSAIRITHVPSGLVVECQDERSQHKNKAKALSVLGSRLHAIEMKRRQQEVSCTRRNLLGTGDRSDRIRTYNFQQGRITDHRISFTSYKLNEIMNGELDLLIQPIIHQHQSDQLNKLLELE.

Position 235 is an N5-methylglutamine (Gln-235).

This sequence belongs to the prokaryotic/mitochondrial release factor family. Methylated by PrmC. Methylation increases the termination efficiency of RF1.

The protein localises to the cytoplasm. Its function is as follows. Peptide chain release factor 1 directs the termination of translation in response to the peptide chain termination codons UAG and UAA. This chain is Peptide chain release factor 1, found in Blochmanniella pennsylvanica (strain BPEN).